Consider the following 335-residue polypeptide: Adenosine deaminase (335 aa).

Zn(2+)-binding residues include H12 and H14. The substrate site is built by H14 and D16. H197 contacts Zn(2+). E200 serves as the catalytic Proton donor. Zn(2+) is bound at residue D278.

It belongs to the metallo-dependent hydrolases superfamily. Adenosine and AMP deaminases family. Adenosine deaminase subfamily. Zn(2+) is required as a cofactor.

The catalysed reaction is adenosine + H2O + H(+) = inosine + NH4(+). It catalyses the reaction 2'-deoxyadenosine + H2O + H(+) = 2'-deoxyinosine + NH4(+). In terms of biological role, catalyzes the hydrolytic deamination of adenosine and 2-deoxyadenosine. In Clostridium botulinum (strain Kyoto / Type A2), this protein is Adenosine deaminase.